Reading from the N-terminus, the 237-residue chain is Redox-sensing transcriptional repressor Rex (237 aa).

The segment at residues 45–84 (LYYRELHRLLAAGESSTNSRDLGAMVNVSPAVVRRDLSSI) is a DNA-binding region (H-T-H motif). Residue 119–124 (GVGSLG) coordinates NAD(+).

This sequence belongs to the transcriptional regulatory Rex family. In terms of assembly, homodimer.

Its subcellular location is the cytoplasm. Its function is as follows. Modulates transcription in response to changes in cellular NADH/NAD(+) redox state. The sequence is that of Redox-sensing transcriptional repressor Rex from Rhodopirellula baltica (strain DSM 10527 / NCIMB 13988 / SH1).